The chain runs to 508 residues: Alpha-amylase (508 aa).

The first 19 residues, 1 to 19 (MLSLIIAACCVTVALAGTF), serve as a signal peptide directing secretion. C46 and C102 are oxidised to a cystine. 3 residues coordinate Ca(2+): N116, R173, and D182. A disulfide bridge links C156 with C175. Residue R210 participates in chloride binding. Residue D212 is the Nucleophile of the active site. H216 is a binding site for Ca(2+). The Proton donor role is filled by E248. Positions 311 and 349 each coordinate chloride. Cystine bridges form between C383/C389 and C455/C467.

Belongs to the glycosyl hydrolase 13 family. Monomer. Ca(2+) is required as a cofactor. It depends on chloride as a cofactor.

The enzyme catalyses Endohydrolysis of (1-&gt;4)-alpha-D-glucosidic linkages in polysaccharides containing three or more (1-&gt;4)-alpha-linked D-glucose units.. The polypeptide is Alpha-amylase (Pecten maximus (King scallop)).